A 410-amino-acid chain; its full sequence is Phosphoglycerate kinase (410 aa).

Substrate contacts are provided by residues 24-26, arginine 40, 63-66, arginine 122, and arginine 162; these read DLN and HLGR. ATP contacts are provided by residues lysine 212, glycine 300, glutamate 331, and 360–363; that span reads GGDS.

It belongs to the phosphoglycerate kinase family. Monomer.

The protein resides in the cytoplasm. The enzyme catalyses (2R)-3-phosphoglycerate + ATP = (2R)-3-phospho-glyceroyl phosphate + ADP. Its pathway is carbohydrate degradation; glycolysis; pyruvate from D-glyceraldehyde 3-phosphate: step 2/5. This Nocardia farcinica (strain IFM 10152) protein is Phosphoglycerate kinase.